The chain runs to 521 residues: Bifunctional purine biosynthesis protein PurH (521 aa).

In terms of domain architecture, MGS-like spans 1–145 (MIKQALISVS…KNHRDVTVVV (145 aa)).

It belongs to the PurH family.

The enzyme catalyses (6R)-10-formyltetrahydrofolate + 5-amino-1-(5-phospho-beta-D-ribosyl)imidazole-4-carboxamide = 5-formamido-1-(5-phospho-D-ribosyl)imidazole-4-carboxamide + (6S)-5,6,7,8-tetrahydrofolate. It catalyses the reaction IMP + H2O = 5-formamido-1-(5-phospho-D-ribosyl)imidazole-4-carboxamide. It functions in the pathway purine metabolism; IMP biosynthesis via de novo pathway; 5-formamido-1-(5-phospho-D-ribosyl)imidazole-4-carboxamide from 5-amino-1-(5-phospho-D-ribosyl)imidazole-4-carboxamide (10-formyl THF route): step 1/1. The protein operates within purine metabolism; IMP biosynthesis via de novo pathway; IMP from 5-formamido-1-(5-phospho-D-ribosyl)imidazole-4-carboxamide: step 1/1. This Burkholderia ambifaria (strain ATCC BAA-244 / DSM 16087 / CCUG 44356 / LMG 19182 / AMMD) (Burkholderia cepacia (strain AMMD)) protein is Bifunctional purine biosynthesis protein PurH.